We begin with the raw amino-acid sequence, 362 residues long: Peptide chain release factor 1 (362 aa).

Position 236 is an N5-methylglutamine (glutamine 236).

The protein belongs to the prokaryotic/mitochondrial release factor family. In terms of processing, methylated by PrmC. Methylation increases the termination efficiency of RF1.

It localises to the cytoplasm. Its function is as follows. Peptide chain release factor 1 directs the termination of translation in response to the peptide chain termination codons UAG and UAA. In Lactobacillus gasseri (strain ATCC 33323 / DSM 20243 / BCRC 14619 / CIP 102991 / JCM 1131 / KCTC 3163 / NCIMB 11718 / NCTC 13722 / AM63), this protein is Peptide chain release factor 1.